Consider the following 167-residue polypeptide: Cyclic pyranopterin monophosphate synthase 2 (167 aa).

The tract at residues M1–A23 is disordered. The segment covering R11–A23 has biased composition (basic and acidic residues). Substrate-binding positions include L86–H88 and M122–E123. Residue D137 is part of the active site.

This sequence belongs to the MoaC family. As to quaternary structure, homohexamer; trimer of dimers.

It catalyses the reaction (8S)-3',8-cyclo-7,8-dihydroguanosine 5'-triphosphate = cyclic pyranopterin phosphate + diphosphate. Its pathway is cofactor biosynthesis; molybdopterin biosynthesis. Functionally, catalyzes the conversion of (8S)-3',8-cyclo-7,8-dihydroguanosine 5'-triphosphate to cyclic pyranopterin monophosphate (cPMP). The chain is Cyclic pyranopterin monophosphate synthase 2 (moaC2) from Mycobacterium bovis (strain ATCC BAA-935 / AF2122/97).